The primary structure comprises 301 residues: Golgi to ER traffic protein 2 (301 aa).

Residues 1 to 167 are Cytoplasmic-facing; that stretch reads MSEPVVDTAE…LEYNTYNQKL (167 aa). A compositionally biased stretch (low complexity) spans 42–55; sequence SQGSSVKTSGVKSV. Residues 42-93 form a disordered region; sequence SQGSSVKTSGVKSVLDQEKEATSSHDDDPEIQDITEITTPPPRTPPIGEDAP. The span at 56–67 shows a compositional bias: basic and acidic residues; the sequence is LDQEKEATSSHD. The chain crosses the membrane as a helical span at residues 168 to 188; sequence WKFRFLLVRVLVTLFNFFYHY. The Lumenal segment spans residues 189-214; it reads TSISDFHASNYAYVRDLSSEEYPVRD. Residues 215 to 234 form a helical membrane-spanning segment; sequence FFTWFATSEVVLVAAYYSVF. Residues 235–278 lie on the Cytoplasmic side of the membrane; that stretch reads HSLGLFHAANQNSIILKVMSMGSMILPQLESYKPLVARFLGYYE. The chain crosses the membrane as a helical span at residues 279–299; it reads LLGIVLGGLSLVIVLFGLLSF. The Lumenal segment spans residues 300–301; sequence AN.

Belongs to the GET2 family. Component of the Golgi to ER traffic (GET) complex, which is composed of GET1, GET2 and GET3. Within the complex, GET1 and GET2 form a heterotetramer which is stabilized by phosphatidylinositol binding and which binds to the GET3 homodimer.

It localises to the endoplasmic reticulum membrane. The protein localises to the golgi apparatus membrane. Required for the post-translational delivery of tail-anchored (TA) proteins to the endoplasmic reticulum. Together with GET1, acts as a membrane receptor for soluble GET3, which recognizes and selectively binds the transmembrane domain of TA proteins in the cytosol. The GET complex cooperates with the HDEL receptor ERD2 to mediate the ATP-dependent retrieval of resident ER proteins that contain a C-terminal H-D-E-L retention signal from the Golgi to the ER. In Candida dubliniensis (strain CD36 / ATCC MYA-646 / CBS 7987 / NCPF 3949 / NRRL Y-17841) (Yeast), this protein is Golgi to ER traffic protein 2.